Here is a 492-residue protein sequence, read N- to C-terminus: Proline--tRNA ligase (492 aa).

It belongs to the class-II aminoacyl-tRNA synthetase family. ProS type 3 subfamily. In terms of assembly, homodimer.

It is found in the cytoplasm. It catalyses the reaction tRNA(Pro) + L-proline + ATP = L-prolyl-tRNA(Pro) + AMP + diphosphate. Catalyzes the attachment of proline to tRNA(Pro) in a two-step reaction: proline is first activated by ATP to form Pro-AMP and then transferred to the acceptor end of tRNA(Pro). In Flavobacterium psychrophilum (strain ATCC 49511 / DSM 21280 / CIP 103535 / JIP02/86), this protein is Proline--tRNA ligase.